We begin with the raw amino-acid sequence, 504 residues long: Ribonuclease Y (504 aa).

Residues 194–279 (TVHVVSLPND…EMVEKAKQEV (86 aa)) form the KH domain. The 94-residue stretch at 320–413 (VLKHSMEVAY…VQAADAISAA (94 aa)) folds into the HD domain.

It belongs to the RNase Y family.

Functionally, endoribonuclease that initiates mRNA decay. This Clostridium novyi (strain NT) protein is Ribonuclease Y.